The primary structure comprises 406 residues: LIM/homeobox protein Lhx1 (406 aa).

LIM zinc-binding domains follow at residues 4–54 and 63–117; these read CAGC…CKND and CAGC…CKED. 2 disordered regions span residues 128-187 and 293-374; these read NSLH…RTTI and YDFF…EVFG. The span at 137–148 shows a compositional bias: low complexity; sequence SDPSLSPDSQDP. Positions 151–167 are enriched in basic and acidic residues; the sequence is DDAKDSESANVSDKEAG. Serine 162 carries the post-translational modification Phosphoserine. The segment at residues 180–239 is a DNA-binding region (homeobox); it reads RRGPRTTIKAKQLETLKAAFAATPKPTRHIREQLAQETGLNMRVIQVWFQNRRSKERRMK. Low complexity predominate over residues 315-327; the sequence is PSSGPSGTPLGGL. A compositionally biased stretch (pro residues) spans 352–362; it reads GDSPSPEPSLP.

As to quaternary structure, interacts with LDB1 via the tandem LIM domains. As to expression, expressed in the brain, thymus, and tonsils. Expressed in samples from patients with chronic myeloid leukemia (CML) and in 58% of acute myeloid leukemia (AML) cell lines.

The protein resides in the nucleus. Its function is as follows. Potential transcription factor. May play a role in early mesoderm formation and later in lateral mesoderm differentiation and neurogenesis. This Homo sapiens (Human) protein is LIM/homeobox protein Lhx1 (LHX1).